A 243-amino-acid polypeptide reads, in one-letter code: ATP synthase subunit a (243 aa).

7 helical membrane-spanning segments follow: residues N29 to L49, I54 to I74, V89 to F109, H114 to F134, I144 to F164, I182 to L202, and A208 to F228.

The protein belongs to the ATPase A chain family. In terms of assembly, F-type ATPases have 2 components, CF(1) - the catalytic core - and CF(0) - the membrane proton channel. CF(1) has five subunits: alpha(3), beta(3), gamma(1), delta(1), epsilon(1). CF(0) has three main subunits: a(1), b(2) and c(9-12). The alpha and beta chains form an alternating ring which encloses part of the gamma chain. CF(1) is attached to CF(0) by a central stalk formed by the gamma and epsilon chains, while a peripheral stalk is formed by the delta and b chains.

It localises to the cell inner membrane. Its function is as follows. Key component of the proton channel; it plays a direct role in the translocation of protons across the membrane. The protein is ATP synthase subunit a of Ehrlichia chaffeensis (strain ATCC CRL-10679 / Arkansas).